Consider the following 500-residue polypeptide: MNYFPWLTLIVVLPISAGSLIFFLPHRGNKVIRWYTIFICMLELLLTTYVFCYHFQLDDPLIQLVEDYKWINFFDFDWRLGIDGLSIGPILLTGFITTLATLAAWPVTRDSRLFHFLMLAMYSGQIGSFSSRDLLLFFIMWELELIPVYLLLSMWGGKKRLYSATKFILYTAGGSIFLLLGVLGIGLYGSNEPTLNFETSANQSYPVALEIIFYIGFFIAFAVKSPIIPLHTWLPDTHGEAHYSTCMLLAGILLKMGAYGLVRINMELLPHAHSIFSPWLVVVGTMQIIYAASTSSGQRNLKKRIAYSSVSHMGFIIIGIGSITDTGLNGAILQIISHGFLGAALFFLAGTSYDRIRLIYLDEMGGIAIPMPKIFTMFSILSMASLALPGMSGFVAELIVFFGIITSQKFLLMPKILITFVMAIGMILTPIYSLSMSRQMFYGYKLFNAPNSYFFDSGPRELFVLISIFLPVIGIGIYPDFVLSLSVDKVEAILSNFFYR.

14 helical membrane-spanning segments follow: residues 4 to 24 (FPWLTLIVVLPISAGSLIFFL), 37 to 57 (IFICMLELLLTTYVFCYHFQL), 87 to 107 (IGPILLTGFITTLATLAAWPV), 113 to 130 (LFHFLMLAMYSGQIGSFS), 134 to 154 (LLLFFIMWELELIPVYLLLSM), 167 to 187 (FILYTAGGSIFLLLGVLGIGL), 208 to 228 (ALEIIFYIGFFIAFAVKSPII), 242 to 262 (HYSTCMLLAGILLKMGAYGLV), 272 to 292 (AHSIFSPWLVVVGTMQIIYAA), 305 to 325 (IAYSSVSHMGFIIIGIGSITD), 330 to 350 (GAILQIISHGFLGAALFFLAG), 386 to 406 (LALPGMSGFVAELIVFFGIIT), 416 to 436 (ILITFVMAIGMILTPIYSLSM), and 462 to 482 (LFVLISIFLPVIGIGIYPDFV).

It belongs to the complex I subunit 4 family.

It localises to the plastid. The protein resides in the chloroplast thylakoid membrane. The catalysed reaction is a plastoquinone + NADH + (n+1) H(+)(in) = a plastoquinol + NAD(+) + n H(+)(out). It carries out the reaction a plastoquinone + NADPH + (n+1) H(+)(in) = a plastoquinol + NADP(+) + n H(+)(out). The protein is NAD(P)H-quinone oxidoreductase chain 4, chloroplastic of Vitis vinifera (Grape).